Here is a 327-residue protein sequence, read N- to C-terminus: Aspartate--ammonia ligase (327 aa).

The protein belongs to the class-II aminoacyl-tRNA synthetase family. AsnA subfamily.

It localises to the cytoplasm. It carries out the reaction L-aspartate + NH4(+) + ATP = L-asparagine + AMP + diphosphate + H(+). It participates in amino-acid biosynthesis; L-asparagine biosynthesis; L-asparagine from L-aspartate (ammonia route): step 1/1. The chain is Aspartate--ammonia ligase from Bacillus cereus (strain AH820).